A 146-amino-acid polypeptide reads, in one-letter code: Large ribosomal subunit protein bL21 (146 aa).

Residues 117 to 146 (ITIGKSAPKSSSKKETVKKETKPKSEKSTN) are disordered. The span at 128 to 146 (SKKETVKKETKPKSEKSTN) shows a compositional bias: basic and acidic residues.

The protein belongs to the bacterial ribosomal protein bL21 family. In terms of assembly, part of the 50S ribosomal subunit. Contacts protein L20.

In terms of biological role, this protein binds to 23S rRNA in the presence of protein L20. This is Large ribosomal subunit protein bL21 from Prochlorococcus marinus (strain MIT 9301).